The following is a 406-amino-acid chain: UPF0754 membrane protein CYA_0973 (406 aa).

2 consecutive transmembrane segments (helical) span residues 1–21 and 385–405; these read MALW…YFTN and IVNL…LFLL.

The protein belongs to the UPF0754 family.

The protein localises to the cell inner membrane. The chain is UPF0754 membrane protein CYA_0973 from Synechococcus sp. (strain JA-3-3Ab) (Cyanobacteria bacterium Yellowstone A-Prime).